The primary structure comprises 139 residues: Phosphoribosyl-AMP cyclohydrolase (139 aa).

Residue D91 coordinates Mg(2+). Residue C92 participates in Zn(2+) binding. Mg(2+) is bound by residues D93 and D95. Zn(2+)-binding residues include C110 and C117.

This sequence belongs to the PRA-CH family. As to quaternary structure, homodimer. The cofactor is Mg(2+). Requires Zn(2+) as cofactor.

The protein localises to the cytoplasm. It carries out the reaction 1-(5-phospho-beta-D-ribosyl)-5'-AMP + H2O = 1-(5-phospho-beta-D-ribosyl)-5-[(5-phospho-beta-D-ribosylamino)methylideneamino]imidazole-4-carboxamide. It functions in the pathway amino-acid biosynthesis; L-histidine biosynthesis; L-histidine from 5-phospho-alpha-D-ribose 1-diphosphate: step 3/9. Its function is as follows. Catalyzes the hydrolysis of the adenine ring of phosphoribosyl-AMP. The protein is Phosphoribosyl-AMP cyclohydrolase of Brucella abortus (strain S19).